The primary structure comprises 402 residues: WAT1-related protein At5g07050 (402 aa).

Transmembrane regions (helical) follow at residues 20–40 (FAMISLQFGYAGMNIITKISL), 48–68 (VLVVYRHAIATAVIAPFAFFF), 74–94 (PKITFSIFMQLFILGLLGPVI), 109–129 (TFSCAMSNMLPAMTFILAVLF), 149–169 (VVTVAGAMLMTIYKGPIVELF), 196–216 (FLKGSILLIFATLAWASLFVL), 229–249 (LSLTTLICFIGTLQAVAVTFV), 266–286 (LAAAYSGIVASSISYYVQGIV), 293–313 (VFATAFSPLMMVIVAVMGSFV), and 318–338 (IFLGGVIGAVLIVIGLYAVLW). EamA domains follow at residues 29–159 (YAGM…MLMT) and 208–337 (LAWA…YAVL).

The protein belongs to the drug/metabolite transporter (DMT) superfamily. Plant drug/metabolite exporter (P-DME) (TC 2.A.7.4) family.

The protein resides in the membrane. The polypeptide is WAT1-related protein At5g07050 (Arabidopsis thaliana (Mouse-ear cress)).